Consider the following 123-residue polypeptide: Protein Wnt-7(I) (123 aa).

S1 carries O-palmitoleoyl serine; by PORCN lipidation. Cysteines 89 and 104 form a disulfide. N-linked (GlcNAc...) asparagine glycosylation is present at N90. Positions 121–123 (CKF) match the Microbody targeting signal motif.

The protein belongs to the Wnt family. In terms of processing, palmitoleoylation is required for efficient binding to frizzled receptors. Depalmitoleoylation leads to Wnt signaling pathway inhibition.

It localises to the secreted. The protein resides in the extracellular space. Its subcellular location is the extracellular matrix. Ligand for members of the frizzled family of seven transmembrane receptors. Probable developmental protein. May be a signaling molecule which affects the development of discrete regions of tissues. Is likely to signal over only few cell diameters. This chain is Protein Wnt-7(I) (WNT-7(I)), found in Eptatretus stoutii (Pacific hagfish).